Consider the following 774-residue polypeptide: MSCYNKALLIGNKVVVILVFLLCLVHSSESLRPLFACDPANGLTRTLRFCRANVPIHVRVQDLLGRLTLQEKIRNLVNNAAAVPRLGIGGYEWWSEALHGISDVGPGAKFGGAFPGATSFPQVITTAASFNQSLWEEIGRVVSDEARAMYNGGVAGLTYWSPNVNILRDPRWGRGQETPGEDPIVAAKYAASYVRGLQGTAAGNRLKVAACCKHYTAYDLDNWNGVDRFHFNAKVTQQDLEDTYNVPFKSCVYEGKVASVMCSYNQVNGKPTCADENLLKNTIRGQWRLNGYIVSDCDSVDVFFNQQHYTSTPEEAAARSIKAGLDLDCGPFLAIFTEGAVKKGLLTENDINLALANTLTVQMRLGMFDGNLGPYANLGPRDVCTPAHKHLALEAAHQGIVLLKNSARSLPLSPRRHRTVAVIGPNSDVTETMIGNYAGKACAYTSPLQGISRYARTLHQAGCAGVACKGNQGFGAAEAAAREADATVLVMGLDQSIEAETRDRTGLLLPGYQQDLVTRVAQASRGPVILVLMSGGPIDVTFAKNDPRVAAIIWAGYPGQAGGAAIANIIFGAANPGGKLPMTWYPQDYVAKVPMTVMAMRASGNYPGRTYRFYKGPVVFPFGFGLSYTTFTHSLAKSPLAQLSVSLSNLNSANTILNSSSHSIKVSHTNCNSFPKMPLHVEVSNTGEFDGTHTVFVFAEPPINGIKGLGVNKQLIAFEKVHVMAGAKQTVQVDVDACKHLGVVDEYGKRRIPMGEHKLHIGDLKHTILVQPQL.

Positions 1-30 (MSCYNKALLIGNKVVVILVFLLCLVHSSES) are cleaved as a signal peptide. N-linked (GlcNAc...) asparagine glycosylation occurs at N131. The active site involves D296. N658 carries an N-linked (GlcNAc...) asparagine glycan.

Belongs to the glycosyl hydrolase 3 family. Expressed in leaves, stems, seedlings, roots, inflorescences, siliques and developing seeds. Expressed in the vasculature of the roots, leaves, flowers and silique. Expressed in tissues undergoing secondary cell wall thickening such as protoxylem, metaxylem, intrafascicular cambium and fibers.

Its subcellular location is the secreted. It localises to the extracellular space. The protein localises to the extracellular matrix. The catalysed reaction is Hydrolysis of terminal non-reducing alpha-L-arabinofuranoside residues in alpha-L-arabinosides.. Involved in pectic arabinan modification in mucilage secretory cells. Also acts as a beta-D-xylosidase during the remodeling of xylans in vascular development. The chain is Beta-D-xylosidase 1 (BXL1) from Arabidopsis thaliana (Mouse-ear cress).